A 279-amino-acid chain; its full sequence is Putative polysaccharide deacetylase YxkH (279 aa).

An N-terminal signal peptide occupies residues 1–19; the sequence is MKRLFLSIFLLGSCLALAA. A lipid anchor (N-palmitoyl cysteine) is attached at Cys20. Cys20 carries S-diacylglycerol cysteine lipidation. The disordered stretch occupies residues 29–51; it reads QPMPKAEQKKPEKKAVQVQKKED. The segment covering 34 to 51 has biased composition (basic and acidic residues); that stretch reads AEQKKPEKKAVQVQKKED. One can recognise a NodB homology domain in the interval 119–279; sequence KCVLITFDDG…AFGAYIESMK (161 aa).

The protein belongs to the polysaccharide deacetylase family.

Its subcellular location is the cell membrane. The polypeptide is Putative polysaccharide deacetylase YxkH (yxkH) (Bacillus subtilis (strain 168)).